The primary structure comprises 88 residues: Alkene monooxygenase system, oxygenase component subunit gamma (88 aa).

Belongs to the TmoB/XamoB family. As to quaternary structure, the alkene monooxygenase multicomponent enzyme system is composed of an electron transfer component and a monooxygenase component interacting with the effector protein XamoD. The electron transfer component is composed of a ferredoxin reductase (XamoF) and a ferredoxin (XamoC), and the monooxygenase component is formed by a heterohexamer (dimer of heterotrimers) of two alpha subunits (XamoA), two beta subunits (XamoE) and two gamma subunits (XamoB).

The protein localises to the cytoplasm. The catalysed reaction is propene + NADH + O2 + H(+) = 1,2-epoxypropane + NAD(+) + H2O. With respect to regulation, inhibited by propyne. Functionally, component of the alkene monooxygenase multicomponent enzyme system which catalyzes the O2- and NADH-dependent epoxidation of short chain (C2 to C6) alkenes to their corresponding epoxides. Also able to catalyze the oxidation of a number of chlorinated alkenes, including trichloroethylene, cis- and trans-1,2-dichloroethylene, vinyl chloride, 1-chloropropylene, 1,3-dichloropropylene and 2,3-dichloropropylene. The polypeptide is Alkene monooxygenase system, oxygenase component subunit gamma (Xanthobacter autotrophicus (strain ATCC BAA-1158 / Py2)).